A 505-amino-acid polypeptide reads, in one-letter code: Glutamate--tRNA ligase (505 aa).

The 'HIGH' region signature appears at P12–T22. The short motif at K253–R257 is the 'KMSKS' region element. K256 is an ATP binding site.

It belongs to the class-I aminoacyl-tRNA synthetase family. Glutamate--tRNA ligase type 1 subfamily. Monomer.

It is found in the cytoplasm. The catalysed reaction is tRNA(Glu) + L-glutamate + ATP = L-glutamyl-tRNA(Glu) + AMP + diphosphate. Functionally, catalyzes the attachment of glutamate to tRNA(Glu) in a two-step reaction: glutamate is first activated by ATP to form Glu-AMP and then transferred to the acceptor end of tRNA(Glu). The polypeptide is Glutamate--tRNA ligase (Chlamydia abortus (strain DSM 27085 / S26/3) (Chlamydophila abortus)).